The sequence spans 258 residues: Phosphoadenosine 5'-phosphosulfate reductase (258 aa).

Catalysis depends on C244, which acts as the Nucleophile; cysteine thiosulfonate intermediate.

Belongs to the PAPS reductase family. CysH subfamily.

It is found in the cytoplasm. The enzyme catalyses [thioredoxin]-disulfide + sulfite + adenosine 3',5'-bisphosphate + 2 H(+) = [thioredoxin]-dithiol + 3'-phosphoadenylyl sulfate. It functions in the pathway sulfur metabolism; hydrogen sulfide biosynthesis; sulfite from sulfate: step 3/3. Its function is as follows. Catalyzes the formation of sulfite from phosphoadenosine 5'-phosphosulfate (PAPS) using thioredoxin as an electron donor. In Vibrio vulnificus (strain YJ016), this protein is Phosphoadenosine 5'-phosphosulfate reductase.